The primary structure comprises 89 residues: Small ribosomal subunit protein uS15 (89 aa).

Belongs to the universal ribosomal protein uS15 family. In terms of assembly, part of the 30S ribosomal subunit. Forms a bridge to the 50S subunit in the 70S ribosome, contacting the 23S rRNA.

In terms of biological role, one of the primary rRNA binding proteins, it binds directly to 16S rRNA where it helps nucleate assembly of the platform of the 30S subunit by binding and bridging several RNA helices of the 16S rRNA. Forms an intersubunit bridge (bridge B4) with the 23S rRNA of the 50S subunit in the ribosome. The sequence is that of Small ribosomal subunit protein uS15 from Bifidobacterium longum subsp. infantis (strain ATCC 15697 / DSM 20088 / JCM 1222 / NCTC 11817 / S12).